A 37-amino-acid chain; its full sequence is Large ribosomal subunit protein bL36 (37 aa).

It belongs to the bacterial ribosomal protein bL36 family.

The polypeptide is Large ribosomal subunit protein bL36 (Alkaliphilus oremlandii (strain OhILAs) (Clostridium oremlandii (strain OhILAs))).